A 232-amino-acid polypeptide reads, in one-letter code: Small ribosomal subunit protein uS3 (232 aa).

In terms of domain architecture, KH type-2 spans 39 to 107 (VRQYLTKELK…PAQINIAEVR (69 aa)).

The protein belongs to the universal ribosomal protein uS3 family. Part of the 30S ribosomal subunit. Forms a tight complex with proteins S10 and S14.

In terms of biological role, binds the lower part of the 30S subunit head. Binds mRNA in the 70S ribosome, positioning it for translation. This is Small ribosomal subunit protein uS3 from Aliivibrio salmonicida (strain LFI1238) (Vibrio salmonicida (strain LFI1238)).